The following is a 393-amino-acid chain: S-adenosylmethionine sensor upstream of mTORC1 (393 aa).

The disordered stretch occupies residues 1-35; sequence MDLRSSAETDPDLSENHPGSVPAELQSRKQEQEKL. Arg-94 contacts S-adenosyl-L-methionine. The tract at residues 118–141 is disordered; it reads DEKSARHATAGNANTDTNAPPQLS. A compositionally biased stretch (low complexity) spans 125–136; that stretch reads ATAGNANTDTNA. S-adenosyl-L-methionine is bound by residues Gly-160, Asp-178, Asp-190, Phe-191, and Ser-232. The disordered stretch occupies residues 362–393; that stretch reads ELPETPYDSDSGESQSSSAPFYELEDPILLQS.

This sequence belongs to the BMT2/SAMTOR family. In terms of assembly, interacts with the GATOR1 complex; interaction is disrupted when samtor binds S-adenosyl-L-methionine. Interacts with the KICSTOR complex; interaction is disrupted when bmt2/samtor binds S-adenosyl-L-methionine.

In terms of biological role, S-adenosyl-L-methionine-binding protein that acts as an inhibitor of mTORC1 signaling via interaction with the GATOR1 and KICSTOR complexes. Acts as a sensor of S-adenosyl-L-methionine to signal methionine sufficiency to mTORC1: in presence of methionine, binds S-adenosyl-L-methionine, leading to disrupt interaction with the GATOR1 and KICSTOR complexes and promote mTORC1 signaling. Upon methionine starvation, S-adenosyl-L-methionine levels are reduced, thereby promoting the association with GATOR1 and KICSTOR, leading to inhibit mTORC1 signaling. Probably also acts as a S-adenosyl-L-methionine-dependent methyltransferase. The sequence is that of S-adenosylmethionine sensor upstream of mTORC1 from Danio rerio (Zebrafish).